The following is a 518-amino-acid chain: MDFGVKDGRIIGFGEYRGTREYDLSGAYVVPGLIDAHVHIESSLLAPAEYARLVLAHGTTTVIADPHEIANVCGAPGIDYMLAQGARTPLDILVMLPSCVPATPFDAGGAVLTAADLARFRGREGVVGLAEVMNVPGVLFGDEDLRAKMDLFEVVDGHAPFLSGKDLNAYIYAGVQSDHECTALPEAREKLLRGMYVMIREGSTERNLHDLLPLVDACTAPRCCFATDDRHADMLAGEGHIDDCVRKAVSGGLEVEQALRMATLSAAGRFGLHDRGALAPGRLADFCVADDPDRFRVLRTFKRGVEVVDAGYLPPACPKSPMHARVPEPGDIRITGRGEARVIEIVPGQITTRDLRYPVDAAGIPDLDRDILKAVVIDRYRATGSGVGLVHGFHLQEGAIAGSVSHDSHNIVAVGAGDADIVRAVAEVVRLGGGLAVVSGDDITALPLECAGLMSALPYDEVVRRLAALEEHARRLGAIANPFMYLSFLALTVIPEVRVTERGVFDVGAFTDVPLFEE.

It belongs to the metallo-dependent hydrolases superfamily. Adenine deaminase family. Mn(2+) is required as a cofactor.

The enzyme catalyses adenine + H2O + H(+) = hypoxanthine + NH4(+). This chain is Adenine deaminase, found in Methanoculleus marisnigri (strain ATCC 35101 / DSM 1498 / JR1).